The sequence spans 585 residues: Putative lipase ATG15 (585 aa).

The chain crosses the membrane as a helical; Signal-anchor for type II membrane protein span at residues 1-21 (MMGLDLLVSLLALSVSPCIAA). Over 22 to 585 (TRSPLQIPVL…SASPPITSPP (564 aa)) the chain is Lumenal. Residues Asn171, Asn193, and Asn275 are each glycosylated (N-linked (GlcNAc...) asparagine). Residue Ser291 is the Charge relay system of the active site. Asn340 and Asn437 each carry an N-linked (GlcNAc...) asparagine glycan. The interval 500–526 (TTTSTVPTASPAPTITPTSPPTTTAST) is disordered.

Belongs to the AB hydrolase superfamily. Lipase family. In terms of assembly, binds to both phosphatidylinositol (PI) and phosphatidylinositol 3,5-bisphosphate (PIP2).

It localises to the endosome. The protein localises to the multivesicular body membrane. Its subcellular location is the prevacuolar compartment membrane. The enzyme catalyses a triacylglycerol + H2O = a diacylglycerol + a fatty acid + H(+). Its function is as follows. Lipase which is essential for lysis of subvacuolar cytoplasm to vacuole targeted bodies and intravacuolar autophagic bodies. Involved in the lysis of intravacuolar multivesicular body (MVB) vesicles. The intravacuolar membrane disintegration by ATG15 is critical to life span extension. The sequence is that of Putative lipase ATG15 (ATG15) from Ajellomyces capsulatus (strain NAm1 / WU24) (Darling's disease fungus).